The primary structure comprises 337 residues: Integrase/recombinase (337 aa).

One can recognise a Core-binding (CB) domain in the interval 14-94 (VKVLDQLRER…ALLFFYGKVL (81 aa)). The region spanning 112 to 328 (RLPVVLTPDE…GGAGVRSPLD (217 aa)) is the Tyr recombinase domain. Active-site residues include Arg-146, Lys-171, His-277, Arg-280, and His-303. Tyr-312 acts as the O-(3'-phospho-DNA)-tyrosine intermediate in catalysis.

Belongs to the 'phage' integrase family.

Putative integrase believed to be involved in the insertion of antibiotic resistance genes into plasmids and transposons. The sequence is that of Integrase/recombinase (int) from Escherichia coli.